The following is a 348-amino-acid chain: Dihydroorotase (348 aa).

Zn(2+) is bound by residues His-14 and His-16. Residues 16–18 (HLR) and Asn-42 each bind substrate. The Zn(2+) site is built by Lys-100, His-137, and His-175. Lys-100 bears the N6-carboxylysine mark. Position 137 (His-137) interacts with substrate. Leu-220 is a binding site for substrate. Asp-248 serves as a coordination point for Zn(2+). Residue Asp-248 is part of the active site. Residues His-252 and Ala-264 each contribute to the substrate site.

Belongs to the metallo-dependent hydrolases superfamily. DHOase family. Class II DHOase subfamily. Homodimer. Zn(2+) serves as cofactor.

It carries out the reaction (S)-dihydroorotate + H2O = N-carbamoyl-L-aspartate + H(+). Its pathway is pyrimidine metabolism; UMP biosynthesis via de novo pathway; (S)-dihydroorotate from bicarbonate: step 3/3. Functionally, catalyzes the reversible cyclization of carbamoyl aspartate to dihydroorotate. The protein is Dihydroorotase of Synechococcus sp. (strain CC9605).